Reading from the N-terminus, the 284-residue chain is Phosphonates import ATP-binding protein PhnC 1 (284 aa).

The region spanning 5–253 (IEVRGLSKSF…MLRDLYGSEA (249 aa)) is the ABC transporter domain. 38-45 (GASGSGKS) contributes to the ATP binding site.

It belongs to the ABC transporter superfamily. Phosphonates importer (TC 3.A.1.9.1) family. The complex is composed of two ATP-binding proteins (PhnC), two transmembrane proteins (PhnE) and a solute-binding protein (PhnD).

It localises to the cell inner membrane. It catalyses the reaction phosphonate(out) + ATP + H2O = phosphonate(in) + ADP + phosphate + H(+). Its function is as follows. Part of the ABC transporter complex PhnCDE involved in phosphonates import. Responsible for energy coupling to the transport system. The sequence is that of Phosphonates import ATP-binding protein PhnC 1 from Cupriavidus metallidurans (strain ATCC 43123 / DSM 2839 / NBRC 102507 / CH34) (Ralstonia metallidurans).